A 394-amino-acid polypeptide reads, in one-letter code: Myb-related protein 2 (394 aa).

The HTH myb-type domain occupies 42–102; the sequence is TDAKPRLKWT…HLQKYRLSKN (61 aa). Positions 73–98 form a DNA-binding region, H-T-H motif; that stretch reads PKTIMKVMGIPGLTLYHLKSHLQKYR. A coiled coil region spans residues 148–168; it reads GEALQMQIEVQRRLHEQLEVQ. The LHEQLE signature appears at 161–166; the sequence is LHEQLE. Positions 338-363 are disordered; the sequence is LHGHKSQHQQGNNEDHKLETRNRKGM. A compositionally biased stretch (basic and acidic residues) spans 350–363; the sequence is NEDHKLETRNRKGM.

It belongs to the MYB-CC family. Isoform 1: Homodimer. Isoform 3: Does not form homodimer. As to expression, expressed in phloem and/or cambium.

Its subcellular location is the nucleus. Transcriptional activator that may activate the transcription of specific genes involved in nitrogen uptake or assimilation. Acts redundantly with MYR1 as a repressor of flowering and organ elongation under decreased light intensity. Represses gibberellic acid (GA)-dependent responses and affects levels of bioactive GA. The polypeptide is Myb-related protein 2 (Arabidopsis thaliana (Mouse-ear cress)).